We begin with the raw amino-acid sequence, 438 residues long: ATP-dependent protease ATPase subunit HslU (438 aa).

Residues Val18, 60 to 65 (GVGKTE), Asp252, Glu317, and Arg389 contribute to the ATP site.

The protein belongs to the ClpX chaperone family. HslU subfamily. A double ring-shaped homohexamer of HslV is capped on each side by a ring-shaped HslU homohexamer. The assembly of the HslU/HslV complex is dependent on binding of ATP.

The protein resides in the cytoplasm. In terms of biological role, ATPase subunit of a proteasome-like degradation complex; this subunit has chaperone activity. The binding of ATP and its subsequent hydrolysis by HslU are essential for unfolding of protein substrates subsequently hydrolyzed by HslV. HslU recognizes the N-terminal part of its protein substrates and unfolds these before they are guided to HslV for hydrolysis. This is ATP-dependent protease ATPase subunit HslU from Saccharophagus degradans (strain 2-40 / ATCC 43961 / DSM 17024).